We begin with the raw amino-acid sequence, 495 residues long: ATP synthase subunit beta, chloroplastic (495 aa).

Residue 172–179 (GGAGVGKT) coordinates ATP.

Belongs to the ATPase alpha/beta chains family. As to quaternary structure, F-type ATPases have 2 components, CF(1) - the catalytic core - and CF(0) - the membrane proton channel. CF(1) has five subunits: alpha(3), beta(3), gamma(1), delta(1), epsilon(1). CF(0) has four main subunits: a(1), b(1), b'(1) and c(9-12).

The protein resides in the plastid. It localises to the chloroplast thylakoid membrane. The catalysed reaction is ATP + H2O + 4 H(+)(in) = ADP + phosphate + 5 H(+)(out). Produces ATP from ADP in the presence of a proton gradient across the membrane. The catalytic sites are hosted primarily by the beta subunits. This is ATP synthase subunit beta, chloroplastic from Convallaria majalis (Lily of the valley).